A 152-amino-acid polypeptide reads, in one-letter code: NADH-ubiquinone oxidoreductase chain 4 (152 aa).

A run of 4 helical transmembrane segments spans residues 2–22 (FSGATTLMIAHGLTSSMYFCL), 43–63 (ILLPLTAFWWLTASLTNLALP), 84–104 (ITIVLTGLNMLITALYSLHMF), and 128–148 (MLMFMHLAPIILLSLNPNIIL).

This sequence belongs to the complex I subunit 4 family.

It is found in the mitochondrion membrane. It catalyses the reaction a ubiquinone + NADH + 5 H(+)(in) = a ubiquinol + NAD(+) + 4 H(+)(out). Core subunit of the mitochondrial membrane respiratory chain NADH dehydrogenase (Complex I) that is believed to belong to the minimal assembly required for catalysis. Complex I functions in the transfer of electrons from NADH to the respiratory chain. The immediate electron acceptor for the enzyme is believed to be ubiquinone. The sequence is that of NADH-ubiquinone oxidoreductase chain 4 (MT-ND4) from Macaca fascicularis (Crab-eating macaque).